Reading from the N-terminus, the 365-residue chain is UDP-N-acetylglucosamine--N-acetylmuramyl-(pentapeptide) pyrophosphoryl-undecaprenol N-acetylglucosamine transferase (365 aa).

Residues 17 to 19 (TGG), Asn129, Arg167, Ser194, Ile250, 269 to 274 (ALTVSE), and Gln295 contribute to the UDP-N-acetyl-alpha-D-glucosamine site.

Belongs to the glycosyltransferase 28 family. MurG subfamily.

The protein resides in the cell inner membrane. It catalyses the reaction di-trans,octa-cis-undecaprenyl diphospho-N-acetyl-alpha-D-muramoyl-L-alanyl-D-glutamyl-meso-2,6-diaminopimeloyl-D-alanyl-D-alanine + UDP-N-acetyl-alpha-D-glucosamine = di-trans,octa-cis-undecaprenyl diphospho-[N-acetyl-alpha-D-glucosaminyl-(1-&gt;4)]-N-acetyl-alpha-D-muramoyl-L-alanyl-D-glutamyl-meso-2,6-diaminopimeloyl-D-alanyl-D-alanine + UDP + H(+). Its pathway is cell wall biogenesis; peptidoglycan biosynthesis. Its function is as follows. Cell wall formation. Catalyzes the transfer of a GlcNAc subunit on undecaprenyl-pyrophosphoryl-MurNAc-pentapeptide (lipid intermediate I) to form undecaprenyl-pyrophosphoryl-MurNAc-(pentapeptide)GlcNAc (lipid intermediate II). The polypeptide is UDP-N-acetylglucosamine--N-acetylmuramyl-(pentapeptide) pyrophosphoryl-undecaprenol N-acetylglucosamine transferase (Shewanella halifaxensis (strain HAW-EB4)).